Consider the following 397-residue polypeptide: Protein PEP-RELATED DEVELOPMENT ARRESTED 1, chloroplastic (397 aa).

Residues 1 to 52 constitute a chloroplast transit peptide; the sequence is MLQSIHLRFSSTPSPSKRESLIIPSVICSFPFTSSSFRPKQTQKLKRLVQFC. Basic and acidic residues predominate over residues 315 to 334; sequence KDEGADNLSKEDDSSTEGRK. Residues 315 to 351 form a disordered region; the sequence is KDEGADNLSKEDDSSTEGRKPSGLNGRGSVTGRKPLP.

Interacts with FSD2 and MRL7. Highly expressed in young leaves, shoots and flowers. Expressed at low levels in stems and siliques.

The protein localises to the plastid. It is found in the chloroplast stroma. The protein resides in the chloroplast nucleoid. Functionally, plays an essential role in early steps of chloroplast development. May be involved in the redox control of plastid gene expression by maintening the redox state around chloroplast nucleoids. May positively regulate plastid-encoded RNA polymerase (PEP) activity, through binding to FSD2. In Arabidopsis thaliana (Mouse-ear cress), this protein is Protein PEP-RELATED DEVELOPMENT ARRESTED 1, chloroplastic (PRDA1).